The primary structure comprises 591 residues: V-type ATP synthase alpha chain (591 aa).

An ATP-binding site is contributed by 233-240 (GPFGAGKT).

The protein belongs to the ATPase alpha/beta chains family.

The enzyme catalyses ATP + H2O + 4 H(+)(in) = ADP + phosphate + 5 H(+)(out). Functionally, produces ATP from ADP in the presence of a proton gradient across the membrane. The V-type alpha chain is a catalytic subunit. The sequence is that of V-type ATP synthase alpha chain from Streptococcus pyogenes serotype M2 (strain MGAS10270).